Reading from the N-terminus, the 341-residue chain is MASIATLGSHCSLQVLKGAKDEGLKTILVCEKKREKLYRRFPFIDELIIVDKFREVLDEKVQSTLEQNDAVLIPHGTLIAQMSSDEIESIKTPIFGNKWILRWESDREMKEKLMREATLPMPKPVTNPSEIEKLSIVKRQGAAGGKGYFMAANEDDYNTKRNQLISEGVISEDETLYIQEYAAGVLAYLTFFYSPLKEELEFYGVDQRHESDIEGLGRIPAEQQMKSNKVPSFNVIGNSPLVLRESLLDEVYTMGENFVEASKRIVAPGMNGPFCIEGVYDENAQFTSFEFSARIVAGSNIYMDGSPYYNLLFNETMSMGKRIAREVKTAAETNQLDKVTT.

Positions 10 and 77 each coordinate 5-amino-1-(5-phospho-beta-D-ribosyl)imidazole-4-carboxamide. The region spanning 106-317 (DREMKEKLMR…YYNLLFNETM (212 aa)) is the ATP-grasp domain. Residues 132–188 (EKLS…VLAY) and glutamate 210 each bind ATP. Asparagine 238 is a 5-amino-1-(5-phospho-beta-D-ribosyl)imidazole-4-carboxamide binding site. Mg(2+) contacts are provided by glutamate 277 and glutamate 290.

This sequence belongs to the phosphohexose mutase family. The cofactor is Mg(2+). Mn(2+) is required as a cofactor.

It catalyses the reaction 5-amino-1-(5-phospho-beta-D-ribosyl)imidazole-4-carboxamide + formate + ATP = 5-formamido-1-(5-phospho-D-ribosyl)imidazole-4-carboxamide + ADP + phosphate. It functions in the pathway purine metabolism; IMP biosynthesis via de novo pathway; 5-formamido-1-(5-phospho-D-ribosyl)imidazole-4-carboxamide from 5-amino-1-(5-phospho-D-ribosyl)imidazole-4-carboxamide (formate route): step 1/1. Its function is as follows. Catalyzes the ATP- and formate-dependent formylation of 5-aminoimidazole-4-carboxamide-1-beta-d-ribofuranosyl 5'-monophosphate (AICAR) to 5-formaminoimidazole-4-carboxamide-1-beta-d-ribofuranosyl 5'-monophosphate (FAICAR) in the absence of folates. This Nitrosopumilus maritimus (strain SCM1) protein is 5-formaminoimidazole-4-carboxamide-1-(beta)-D-ribofuranosyl 5'-monophosphate synthetase.